A 159-amino-acid polypeptide reads, in one-letter code: Na(+)/H(+) antiporter subunit E1 (159 aa).

The next 4 membrane-spanning stretches (helical) occupy residues 1–21 (MAIQ…LSGS), 27–47 (LLLG…ILPG), 49–69 (FYFI…VELL), and 101–121 (WQIV…VLGI).

The protein belongs to the CPA3 antiporters (TC 2.A.63) subunit E family. May form a heterooligomeric complex that consists of seven subunits: mnhA1, mnhB1, mnhC1, mnhD1, mnhE1, mnhF1 and mnhG1.

It localises to the cell membrane. Mnh complex is a Na(+)/H(+) antiporter involved in Na(+) excretion. This Staphylococcus haemolyticus (strain JCSC1435) protein is Na(+)/H(+) antiporter subunit E1 (mnhE1).